The primary structure comprises 566 residues: MDLHRAAFKMENSSYLPNPLASPALMVLASTAEASRDASIPCQQPRPFGVPVSVDKDVHIPFTNGSYTFASMYHRQGGVPGTFANRDFPPSLLHLHPQFAPPNLDCTPISMLNHSGVGAFRPFASTEDRESYQSAFTPAKRLKNCHDTESPHLRFSDADGKEYDFGTQLPSSSPGSLKVDDTGKKIFAVSGLISDRETSSSPEDRNDRCKKKAVALFDSQAPLCPICQVLLRPSELQEHMEQELEQLAQLPASKNSLLKDAMAPGTPKSLLLSASIKREGDSPTASPHSSATEDLHHSDRYQTFLRVRANRQTRLNARIGKMKRRKQDEGQREGSCMAEDDAVDIEHADSNRFEEYEWCGQKRIRATTLLEGGFRGSGFVMCSGKENPDSDADLDVDGDDTLEYGKPQYTEADVIPCTGEEPGEAKEREALRGAVLNGGPPSTRITPEFSKWASDEMPSTSNGEGSKQEAMQKTCKNSDIEKITEESAVTTFEALKARVRELERQLSRGDRYKCLICMDSYSMPLTSIQCWHVHCEECWLRTLGAKKLCPQCNTITAPGDLRRIYL.

Lys277 participates in a covalent cross-link: Glycyl lysine isopeptide (Lys-Gly) (interchain with G-Cter in SUMO2). The disordered stretch occupies residues 277-300 (KREGDSPTASPHSSATEDLHHSDR). The segment covering 291–300 (ATEDLHHSDR) has biased composition (basic and acidic residues). Ser390 carries the post-translational modification Phosphoserine. A coiled-coil region spans residues 485-513 (EESAVTTFEALKARVRELERQLSRGDRYK). The segment at 514 to 522 (CLICMDSYS) is required for targeting to the cytoplasm. The segment at 514-553 (CLICMDSYSMPLTSIQCWHVHCEECWLRTLGAKKLCPQCN) adopts an RING-type zinc-finger fold.

In terms of assembly, interacts with SIN3B. Interacts with CTNNB1 (via Armadillo repeats 2-8). Interacts with USP7 (via MATH domain). Post-translationally, auto-ubiquitinated; leads to proteasomal degradation. In terms of tissue distribution, in the brain, expressed in the hippocampus, telenecephalon and cerebellum. No expression in astro glial cells or in neural progenitor cells.

It localises to the cytoplasm. It is found in the nucleus. The enzyme catalyses S-ubiquitinyl-[E2 ubiquitin-conjugating enzyme]-L-cysteine + [acceptor protein]-L-lysine = [E2 ubiquitin-conjugating enzyme]-L-cysteine + N(6)-ubiquitinyl-[acceptor protein]-L-lysine.. It functions in the pathway protein modification; protein ubiquitination. In terms of biological role, E3 ubiquitin-protein ligase that promotes the ubiquitination and proteasomal degradation of SIN3B. Independently of its E3 ligase activity, acts as a CTNNB1 stabilizer through USP7-mediated deubiquitination of CTNNB1 and promotes Wnt signaling. Plays a critical role in the regulation of nuclear lamina. This chain is E3 ubiquitin-protein ligase Rnf220 (Rnf220), found in Mus musculus (Mouse).